The chain runs to 120 residues: U13-lycotoxin-Ls1a (120 aa).

A signal peptide spans 1-16 (MKILFVLISILYAVYC). A propeptide spanning residues 17–54 (FSSEEDVDSAYLANELEPVEDINSEQYAALEPKEEQGR) is cleaved from the precursor. 4 disulfide bridges follow: C56–C70, C63–C76, C69–C87, and C78–C85. In terms of domain architecture, Agouti spans 56–95 (CADMGQDCKDDCDCCLNIATCNCWFGRYFCSCTFGDYQTC).

The protein belongs to the neurotoxin 05 (agouti) family. Post-translationally, contains 6 disulfide bonds. As to expression, expressed by the venom gland.

It localises to the secreted. The chain is U13-lycotoxin-Ls1a from Lycosa singoriensis (Wolf spider).